Consider the following 421-residue polypeptide: Magnesium transporter MRS2-5 (421 aa).

The next 2 helical transmembrane spans lie at 357–377 (LLLT…AVFG) and 393–413 (YVLL…VLYF). The Required for magnesium transport activity motif lies at 377 to 379 (GMN).

It belongs to the CorA metal ion transporter (MIT) (TC 1.A.35.5) family. In terms of tissue distribution, expressed in the whole plant.

The protein resides in the membrane. Its function is as follows. Magnesium transporter that may mediate the influx of magnesium. This is Magnesium transporter MRS2-5 (MRS2-5) from Arabidopsis thaliana (Mouse-ear cress).